A 1390-amino-acid polypeptide reads, in one-letter code: DNA-directed RNA polymerase subunit beta'' (1390 aa).

Residues Cys224, Cys295, Cys302, and Cys305 each contribute to the Zn(2+) site.

Belongs to the RNA polymerase beta' chain family. RpoC2 subfamily. In terms of assembly, in plastids the minimal PEP RNA polymerase catalytic core is composed of four subunits: alpha, beta, beta', and beta''. When a (nuclear-encoded) sigma factor is associated with the core the holoenzyme is formed, which can initiate transcription. Zn(2+) is required as a cofactor.

It localises to the plastid. It is found in the chloroplast. It carries out the reaction RNA(n) + a ribonucleoside 5'-triphosphate = RNA(n+1) + diphosphate. Its function is as follows. DNA-dependent RNA polymerase catalyzes the transcription of DNA into RNA using the four ribonucleoside triphosphates as substrates. This chain is DNA-directed RNA polymerase subunit beta'', found in Daucus carota (Wild carrot).